Consider the following 234-residue polypeptide: MAEPGPEPGRAWRLLALCGAAVFLAAAAAGGALVAWNLAASTARSPRCPEPEQMNATVRPPDSAPEVEELRRRLAEAEQAQENLVWQLQRAEGDKRELEAALKACKDSQSRLQTQLKALKIEMDQAKVRGTQMGLENGMLTEALVRWEATATESKQQLEEALQRAGAAEAAGEACVSREVALREHIYALEAELGTLRKESRLRPRSGSRTKPSISHRPKSGSTKGCRRPPRDPQ.

Residues 1-43 form the signal peptide; sequence MAEPGPEPGRAWRLLALCGAAVFLAAAAAGGALVAWNLAASTA. The interval 44-63 is disordered; the sequence is RSPRCPEPEQMNATVRPPDS. The stretch at 67–171 forms a coiled coil; that stretch reads VEELRRRLAE…LQRAGAAEAA (105 aa). The tract at residues 194 to 234 is disordered; the sequence is GTLRKESRLRPRSGSRTKPSISHRPKSGSTKGCRRPPRDPQ. Positions 203–219 are enriched in basic residues; that stretch reads RPRSGSRTKPSISHRPK.

The polypeptide is Coiled-coil domain-containing protein 194 (Mus musculus (Mouse)).